The chain runs to 221 residues: Thiamine-phosphate synthase (221 aa).

Residues 46 to 50 and asparagine 82 contribute to the 4-amino-2-methyl-5-(diphosphooxymethyl)pyrimidine site; that span reads QFREK. 2 residues coordinate Mg(2+): aspartate 83 and aspartate 102. Serine 121 contributes to the 4-amino-2-methyl-5-(diphosphooxymethyl)pyrimidine binding site. A 2-[(2R,5Z)-2-carboxy-4-methylthiazol-5(2H)-ylidene]ethyl phosphate-binding site is contributed by 148–150; it reads TQS. 4-amino-2-methyl-5-(diphosphooxymethyl)pyrimidine is bound at residue lysine 151. 2-[(2R,5Z)-2-carboxy-4-methylthiazol-5(2H)-ylidene]ethyl phosphate-binding positions include glycine 180 and 200 to 201; that span reads IS.

The protein belongs to the thiamine-phosphate synthase family. Mg(2+) is required as a cofactor.

The enzyme catalyses 2-[(2R,5Z)-2-carboxy-4-methylthiazol-5(2H)-ylidene]ethyl phosphate + 4-amino-2-methyl-5-(diphosphooxymethyl)pyrimidine + 2 H(+) = thiamine phosphate + CO2 + diphosphate. The catalysed reaction is 2-(2-carboxy-4-methylthiazol-5-yl)ethyl phosphate + 4-amino-2-methyl-5-(diphosphooxymethyl)pyrimidine + 2 H(+) = thiamine phosphate + CO2 + diphosphate. It carries out the reaction 4-methyl-5-(2-phosphooxyethyl)-thiazole + 4-amino-2-methyl-5-(diphosphooxymethyl)pyrimidine + H(+) = thiamine phosphate + diphosphate. It participates in cofactor biosynthesis; thiamine diphosphate biosynthesis; thiamine phosphate from 4-amino-2-methyl-5-diphosphomethylpyrimidine and 4-methyl-5-(2-phosphoethyl)-thiazole: step 1/1. Condenses 4-methyl-5-(beta-hydroxyethyl)thiazole monophosphate (THZ-P) and 2-methyl-4-amino-5-hydroxymethyl pyrimidine pyrophosphate (HMP-PP) to form thiamine monophosphate (TMP). The protein is Thiamine-phosphate synthase of Pasteurella multocida (strain Pm70).